Consider the following 289-residue polypeptide: Glyoxylate/succinic semialdehyde reductase 1 (289 aa).

M1 bears the N-acetylmethionine mark. NADP(+) contacts are provided by residues G4–N18 and T95. The active site involves K170. K238 lines the NADP(+) pocket.

The protein belongs to the HIBADH-related family. NP60 subfamily.

The protein resides in the cytoplasm. It localises to the cytosol. The catalysed reaction is glycolate + NADP(+) = glyoxylate + NADPH + H(+). It carries out the reaction 4-hydroxybutanoate + NADP(+) = succinate semialdehyde + NADPH + H(+). Its activity is regulated as follows. The ratio of NADPH/NADP(+) may regulate enzymatic activity. In terms of biological role, catalyzes the NADPH-dependent reduction of glyoxylate to glycolate as well as succinic semialdehyde (SSA) to gamma-hydroxybutyrate in vitro. May function in redox homeostasis and play a role in oxidative stress tolerance by detoxifying glyoxylate and SSA generated in glycolate metabolism and GABA metabolism, respectively. The polypeptide is Glyoxylate/succinic semialdehyde reductase 1 (GLYR1) (Arabidopsis thaliana (Mouse-ear cress)).